The primary structure comprises 346 residues: Tryptophan--tRNA ligase (346 aa).

ATP-binding positions include 11–13 and 19–20; these read RPT and GH. Residues 12 to 20 carry the 'HIGH' region motif; the sequence is PTGKLHLGH. D143 contacts L-tryptophan. ATP-binding positions include 155–157, L193, and 201–205; these read GKD and KMSKS. The 'KMSKS' region signature appears at 201–205; that stretch reads KMSKS.

The protein belongs to the class-I aminoacyl-tRNA synthetase family. Homodimer.

It is found in the cytoplasm. It carries out the reaction tRNA(Trp) + L-tryptophan + ATP = L-tryptophyl-tRNA(Trp) + AMP + diphosphate + H(+). Its function is as follows. Catalyzes the attachment of tryptophan to tRNA(Trp). The polypeptide is Tryptophan--tRNA ligase (Chlamydia muridarum (strain MoPn / Nigg)).